A 125-amino-acid polypeptide reads, in one-letter code: Homeobox protein HD-8 (125 aa).

Residues 30–89 (EPDTRTRKTTFQMMVLKEVFKIAPHPSTLTKADLALMIKLPLKAVQIWFQNERSRKERGG) constitute a DNA-binding region (homeobox).

The protein localises to the nucleus. In Encephalitozoon cuniculi (strain GB-M1) (Microsporidian parasite), this protein is Homeobox protein HD-8 (HD-8).